The chain runs to 614 residues: Pyruvate decarboxylase 2 (614 aa).

Substrate-binding residues include aspartate 50 and histidine 137. Positions 415-523 (DSWFNCQKLK…FLINNGGYTI (109 aa)) are thiamine pyrophosphate binding. The Mg(2+) site is built by aspartate 491, asparagine 518, and glycine 520. Glutamate 524 lines the substrate pocket.

Belongs to the TPP enzyme family. In terms of assembly, homotetramer. It depends on a metal cation as a cofactor. The cofactor is thiamine diphosphate. Pollen.

The catalysed reaction is a 2-oxocarboxylate + H(+) = an aldehyde + CO2. This Nicotiana tabacum (Common tobacco) protein is Pyruvate decarboxylase 2 (PDC2).